We begin with the raw amino-acid sequence, 428 residues long: Aminotransferase verI (428 aa).

The residue at position 254 (Lys254) is an N6-(pyridoxal phosphate)lysine.

Belongs to the class-I pyridoxal-phosphate-dependent aminotransferase family. Requires pyridoxal 5'-phosphate as cofactor.

It participates in mycotoxin biosynthesis. In terms of biological role, aminotransferase; part of the gene cluster that mediates the biosynthesis of 11'-deoxyverticillin A, one of the dimeric epipolythiodioxopiperazines (ETPs) from the verticillin family that act as mycotoxins. 11'-deoxyverticillin A is required for normal conidiation. The nonribosomal peptide synthetase verP is speculated to be responsible for condensation of amino acids to form the carbon skeleton of verticillin, whereas the cluster-specific tailoring enzymes are involved in further modifications leading to the production of 11'-deoxyverticillin A. In Clonostachys rogersoniana, this protein is Aminotransferase verI.